Reading from the N-terminus, the 307-residue chain is Nucleotide-binding protein Arth_2083 (307 aa).

30–37 provides a ligand contact to ATP; the sequence is GMSGAGRS. A GTP-binding site is contributed by 81–84; that stretch reads DVRS.

Belongs to the RapZ-like family.

Displays ATPase and GTPase activities. This Arthrobacter sp. (strain FB24) protein is Nucleotide-binding protein Arth_2083.